The primary structure comprises 2481 residues: MSTSSQSFVAGRPASMASPSQSHRFCGPSATASGGGSFDTLNRVIADLCSRGNPKEGAPLAFRKHVEEAVRDLSGEASSRFMEQLYDRIANLIESTDVAENMGALRAIDELTEIGFGENATKVSRFAGYMRTVFELKRDPEILVLASRVLGHLARAGGAMTSDEVEFQMKTAFDWLRVDRVEYRRFAAVLILKEMAENASTVFNVHVPEFVDAIWVALRDPQLQVRERAVEALRACLRVIEKRETRWRVQWYYRMFEATQDGLGRNAPVHSIHGSLLAVGELLRNTGEFMMSRYREVAEIVLRYLEHRDRLVRLSITSLLPRIAHFLRDRFVTNYLTICMNHILTVLRIPAERASGFIALGEMAGALDGELIHYLPTIMSHLRDAIAPRKGRPLLEAVACVGNIAKAMGSTVETHVRDLLDVMFSSSLSSTLVDALDQITISIPSLLPTVQDRLLDCISLVLSKSHYSQAKPPVTIVRGSTVGMAPQSSDPSCSAQVQLALQTLARFNFKGHDLLEFARESVVVYLDDEDAATRKDAALCCCRLIANSLSGITQFGSSRSTRAGGRRRRLVEEIVEKLLRTAVADADVTVRKSIFVALFGNQCFDDYLAQADSLTAIFASLNDEDLDVREYAISVAGRLSEKNPAYVLPALRRHLIQLLTYLELSADNKCREESAKLLGCLVRNCERLILPYVAPVQKALVARLSEGTGVNANNNIVTGVLVTVGDLARVGGLAMRQYIPELMPLIVEALMDGAAVAKREVAVSTLGQVVQSTGYVVTPYKEYPLLLGLLLKLLKGDLVWSTRREVLKVLGIMGALDPHVHKRNQQSLSGSHGEVPRGTGDSGQPIPSIDELPVELRPSFATSEDYYSTVAINSLMRILRDASLLSYHKRVVRSLMIIFKSMGLGCVPYLPKVLPELFHTVRTSDENLKDFITWGLGTLVSIVRQHIRKYLPELLSLVSELWSSFTLPGPIRPSRGLPVLHLLEHLCLALNDEFRTYLPVILPCFIQVLGDAERFNDYTYVPDILHTLEVFGGTLDEHMHLLLPALIRLFKVDAPVAIRRDAIKTLTRVIPCVQVTGHISALVHHLKLVLDGKNDELRKDAVDALCCLAHALGEDFTIFIESIHKLLLKHRLRHKEFEEIHARWRRREPLIVATTATQQLSRRLPVEVIRDPVIENEIDPFEEGTDRNHQVNDGRLRTAGEASQRSTKEDWEEWMRHFSIELLKESPSPALRTCAKLAQLQPFVGRELFAAGFVSCWAQLNESSQKQLVRSLEMAFSSPNIPPEILATLLNLAEFMEHDEKPLPIDIRLLGALAEKCRVFAKALHYKEMEFEGPRSKRMDANPVAVVEALIHINNQLHQHEAAVGILTYAQQHLDVQLKESWYEKLQRWDDALKAYTLKASQTTNPHLVLEATLGQMRCLAALARWEELNNLCKEYWSPAEPSARLEMAPMAAQAAWNMGEWDQMAEYVSRLDDGDETKLRGLASPVSSGDGSSNGTFFRAVLLVRRAKYDEAREYVERARKCLATELAALVLESYERAYSNMVRVQQLSELEEVIEYYTLPVGNTIAEERRALIRNMWTQRIQGSKRNVEVWQALLAVRALVLPPTEDVETWLKFASLCRKSGRISQAKSTLLKLLPFDPEVSPENMQYHGPPQVMLGYLKYQWSLGEERKRKEAFTKLQILTRELSSVPHSQSDILASMVSSKGANVPLLARVNLKLGTWQWALSSGLNDGSIQEIRDAFDKSTCYAPKWAKAWHTWALFNTAVMSHYISRGQIASQYVVSAVTGYFYSIACAANAKGVDDSLQDILRLLTLWFNHGATADVQTALKTGFSHVNINTWLVVLPQIIARIHSNNRAVRELIQSLLIRIGENHPQALMYPLLVACKSISNLRRAAAQEVVDKVRQHSGALVDQAQLVSHELIRVAILWHEMWHEALEEASRLYFGEHNIEGMLKVLEPLHDMLDEGVKKDSTTIQERAFIEAYRHELKEAHECCCNYKITGKDAELTQAWDLYYHVFKRIDKQLASLTTLDLESVSPELLLCRDLELAVPGTYRADAPVVTISSFSRQLVVITSKQRPRKLTIHGNDGEDYAFLLKGHEDLRQDERVMQLFGLVNTLLENSRKTAEKDLSIQRYSVIPLSPNSGLIGWVPNCDTLHHLIREHRDARKIILNQENKHMLSFAPDYDNLPLIAKVEVFEYALENTEGNDLSRVLWLKSRSSEVWLERRTNYTRSLAVMSMVGYILGLGDRHPSNLMLHRYSGKILHIDFGDCFEASMNREKFPEKVPFRLTRMLVKAMEVSGIEGNFRSTCENVMQVLRTNKDSVMAMMEAFVHDPLINWRLFNFNEVPQLALLGNNNPNAPADVEPDEEDEDPADIDLPQPQRSTREKEILQAVNMLGDANEVLNERAVVVMARMSHKLTGRDFSSSAIPSNPIADHNNLLGGDSHEVEHGLSVKVQVQKLINQATSHENLCQNYVGWCPFW.

The tract at residues 1-31 (MSTSSQSFVAGRPASMASPSQSHRFCGPSAT) is disordered. HEAT repeat units lie at residues 205–242 (VHVP…VIEK), 292–329 (SRYR…FLRD), 373–410 (HYLP…AMGS), 434–471 (DALD…SQAK), 569–607 (RLVE…FDDY), 608–645 (LAQA…KNPA), 737–775 (QYIP…STGY), and 781–819 (KEYP…LDPH). The tract at residues 823–847 (RNQQSLSGSHGEVPRGTGDSGQPIP) is disordered. 6 HEAT repeats span residues 866-904 (YYST…SMGL), 908-945 (PYLP…IVRQ), 952-992 (PELL…ALND), 996-1036 (TYLP…GTLD), 1037-1075 (EHMH…CVQV), and 1077-1114 (GHIS…ALGE). A disordered region spans residues 1179–1204 (DPFEEGTDRNHQVNDGRLRTAGEASQ). The segment covering 1184-1198 (GTDRNHQVNDGRLRT) has biased composition (basic and acidic residues). The region spanning 1309–1887 (LLGALAEKCR…MYPLLVACKS (579 aa)) is the FAT domain. 2 consecutive short sequence motifs (nuclear localization signal) follow at residues 1505 to 1512 (VRRAKYDE) and 2075 to 2080 (KQRPRK). Positions 2065-2378 (FSRQLVVITS…DEDPADIDLP (314 aa)) constitute a PI3K/PI4K catalytic domain. The segment at 2071–2077 (VITSKQR) is G-loop. The interval 2244–2252 (GLGDRHPSN) is catalytic loop. The segment at 2264–2289 (HIDFGDCFEASMNREKFPEKVPFRLT) is activation loop. Residues 2354–2384 (NNNPNAPADVEPDEEDEDPADIDLPQPQRST) are disordered. Acidic residues predominate over residues 2363–2374 (VEPDEEDEDPAD). Phosphoserine is present on serine 2424. The FATC domain maps to 2449–2481 (HGLSVKVQVQKLINQATSHENLCQNYVGWCPFW).

It belongs to the PI3/PI4-kinase family. As to quaternary structure, interacts with RAPTOR1 and itself. Interacts with FKBP12 in a rapamycin-dependent manner. Binds to LST8-1. Hyperactivated upon interaction with cauliflower mosaic virus (CaMV) Tav protein. Post-translationally, activated by phosphorylation on Ser-2424 triggered by cauliflower mosaic virus P6 and auxin. Highly expressed in root meristems, shoot apical meristem (SAM) and floral buds.

It localises to the cytoplasm. The protein localises to the nucleus. It catalyses the reaction L-seryl-[protein] + ATP = O-phospho-L-seryl-[protein] + ADP + H(+). The catalysed reaction is L-threonyl-[protein] + ATP = O-phospho-L-threonyl-[protein] + ADP + H(+). With respect to regulation, almost insensitive to rapamycin. Strongly repressed by specific active site inhibitors (asTORis) such as AZD-8055, TORIN2 and WYE-132, and, to a lesser extent, by KU63794, WYE-354 and TORIN1, leading to impaired photoautotrophic growth and abnormally early meristematic cells differentiation. Repression by TORIN1 leads to impaired responses to auxin, including gravitropism. Combined treatment with rapamycin and active-site inhibitors (e.g. Torin1 and AZD-8055) results in synergistic inhibition of activity and plant growth. Inhibition by KU63794 leads to reduced auxin content in root tips. AZD-8055 treatment reduces abscisic acid (ABA) levels. In addition, inhibition by AZD-8055 leads to a strong reduction of watermelon mosaic virus (WMV) infection. Functionally, essential cell growth regulator that controls development from early embryo to seed production. Controls plant growth in environmental stress conditions. Acts through the phosphorylation of downstream effectors that are recruited by the binding partner RAPTOR. Acts by activating transcription, protein synthesis and ribosome biogenesis, and inhibiting mRNA degradation and autophagy. Can phosphorylate TAP46, a regulatory subunit of protein phosphatase 2A that modulates cell growth and survival. Involved in modulating the transition from heterotrophic to photoautotrophic growth by regulating the expression of chloroplast- and photosynthesis-associated genes. Essential for auxin signaling transduction, probably acting in polysomes to maintain the active ATPK1/S6K1 (and thus TIF3H1/eIF3h) phosphorylation status that is critical for translation reinitiation (e.g. uORF-mRNAs loading). Promotes abscisic acid (ABA) biosynthesis. Involved in the regulation of sugar-mediated (e.g. glucose and sucrose) glycolysis- and mitochondrial bioenergetics-dependent root growth promotion. Required for sugar (e.g. glucose) promotion of hypocotyl elongation in the dark, by activating the brassinosteroid pathway and stabilizing BZR1. The regulation of BZR1 degradation is dependent on autophagy. Regulates the expression, phosphorylation and ribosome association of MRFs (e.g. MRF1, MRF3 and MRF4), especially under energy-deficient conditions. (Microbial infection) Binding to cauliflower mosaic virus (CaMV) Tav protein is critical for both translation reinitiation and viral fitness. When activated by CaMV P6, promotes CaMV translation by inhibiting cellular autophagy and suppressing both silencing and innate immunity, thus conferring sensitivity to P.syringae. Its function is as follows. (Microbial infection) Required during infection by some potyvirus such as Watermelon mosaic virus (WMV) but not for turnip mosaic virus (TuMV). The protein is Serine/threonine-protein kinase TOR of Arabidopsis thaliana (Mouse-ear cress).